We begin with the raw amino-acid sequence, 487 residues long: Schwannomin-interacting protein 1 (487 aa).

Disordered stretches follow at residues 1-74 (MERS…VSAL), 88-221 (VIDE…PVPP), 236-260 (FREQ…NERE), and 308-354 (SGSD…SLDD). Positions 14-27 (DQGKHSDSDYREDG) are enriched in basic and acidic residues. Low complexity predominate over residues 32-67 (SDAGSSSSSSRASSQSNSTKVTPCSECKSSSSPGGS). The span at 92–106 (WAPEEDGEEEEEEDE) shows a compositional bias: acidic residues. 2 stretches are compositionally biased toward basic and acidic residues: residues 107–123 (RDQR…REPG) and 153–162 (HQHDPQDLRH). Serine 117 bears the Phosphoserine mark. Positions 242-255 (RNQGQARTNSTSAQ) are enriched in polar residues. Residues 309-323 (GSDKDSDADDSKTET) are compositionally biased toward basic and acidic residues. The segment covering 324–335 (SLDTPLSPMSKQ) has biased composition (polar residues). A compositionally biased stretch (acidic residues) spans 344 to 354 (TTEEESESLDD). Residues 424–458 (IGQLQVIVNDLHSQIESLNEELVQLLLIRDELHTE) adopt a coiled-coil conformation.

It belongs to the SCHIP1 family. In terms of assembly, homooligomer (via coiled coil domain). Interacts with NF2; the interaction is direct. Interacts with ANK3. In terms of tissue distribution, preferentially expressed in brain, skeletal muscles and heart. Also expressed in detected in pancreas, kidney, liver, lung, and placenta.

Its subcellular location is the cytoplasm. The chain is Schwannomin-interacting protein 1 from Homo sapiens (Human).